Consider the following 716-residue polypeptide: Epidermal growth factor receptor kinase substrate 8-like protein 1 (716 aa).

The region spanning 35-164 is the PTB domain; that stretch reads QYHVNHLVTF…LQNYRSGRGE (130 aa). 5 disordered regions span residues 175–194, 203–249, 404–472, 528–582, and 600–628; these read EELR…QRRP, VEPS…GPEL, PGVE…ETES, YNIL…SLDP, and SRLA…PRSE. S182 is subject to Phosphoserine. T187 is subject to Phosphothreonine. A compositionally biased stretch (basic and acidic residues) spans 435–446; it reads PWEDPVEKQLQH. A compositionally biased stretch (polar residues) spans 453 to 464; it reads QSAPQVAVNGQQ. The 60-residue stretch at 477 to 536 folds into the SH3 domain; sequence KARKWVLCNYDFQARNGSELSVKHRDVLEVLDDRRKWWKVRDHQGQEGYVPYNILTPHPG. Pro residues predominate over residues 553–563; the sequence is TPPPPPAPAPA. The stretch at 682-713 forms a coiled coil; that stretch reads VQRALLEDREKVSELEAVMEKQKKKVEGETKT.

It belongs to the EPS8 family. In terms of assembly, interacts with ABI1. Part of a complex that contains SOS1, ABI1 and EPS8L2. Associates with F-actin. Detected in placenta, skin, mammary gland, bone marrow and stomach.

It localises to the cytoplasm. Functionally, stimulates guanine exchange activity of SOS1. May play a role in membrane ruffling and remodeling of the actin cytoskeleton. The protein is Epidermal growth factor receptor kinase substrate 8-like protein 1 (Eps8l1) of Mus musculus (Mouse).